The primary structure comprises 529 residues: Peptide chain release factor 3 (529 aa).

In terms of domain architecture, tr-type G spans 11–280; sequence AKRRTFAIIS…GLVEWAPAPM (270 aa). Residues 20-27, 88-92, and 142-145 contribute to the GTP site; these read SHPDAGKT, DTPGH, and NKLD.

It belongs to the TRAFAC class translation factor GTPase superfamily. Classic translation factor GTPase family. PrfC subfamily.

The protein resides in the cytoplasm. Its function is as follows. Increases the formation of ribosomal termination complexes and stimulates activities of RF-1 and RF-2. It binds guanine nucleotides and has strong preference for UGA stop codons. It may interact directly with the ribosome. The stimulation of RF-1 and RF-2 is significantly reduced by GTP and GDP, but not by GMP. The chain is Peptide chain release factor 3 from Shigella flexneri serotype 5b (strain 8401).